The following is a 517-amino-acid chain: Maturase K (517 aa).

The protein belongs to the intron maturase 2 family. MatK subfamily.

It is found in the plastid. It localises to the chloroplast. Usually encoded in the trnK tRNA gene intron. Probably assists in splicing its own and other chloroplast group II introns. This is Maturase K from Palhinhaea cernua (Nodding clubmoss).